The sequence spans 847 residues: Lethal(3)malignant brain tumor-like protein 1 (847 aa).

Composition is skewed to basic and acidic residues over residues 65–82 (FPRE…EKGV) and 144–155 (AVKEGHAKKDGD). Disordered stretches follow at residues 65 to 87 (FPRE…SEPI), 142 to 163 (AEAV…PTSR), and 237 to 296 (VKKR…SEEK). 3 MBT repeats span residues 300–400 (WSWA…LQPP), 408–507 (FSWT…LTPP), and 516–611 (FIWE…LQPP). The tract at residues 473-480 (FDNWDDTY) is interaction with monomethylated and dimethylated peptides. The CCHHC-type zinc-finger motif lies at 639-682 (SKYSFHHRKCPTPGCDGSGHVTGRFTAHYCLSGCPLAEKNQGKL). Cysteine 648, cysteine 653, histidine 666, and cysteine 672 together coordinate Zn(2+). The SAM domain maps to 778 to 842 (WTIDEVFSFV…YNAILMFKNA (65 aa)).

In terms of assembly, homodimer.

The protein resides in the nucleus. Functionally, polycomb group (PcG) protein that specifically recognizes and binds mono- and dimethyllysine residues on target proteins, thereby acting as a 'reader' of a network of post-translational modifications. PcG proteins maintain the transcriptionally repressive state of genes: acts as a chromatin compaction factor by recognizing and binding mono- and dimethylated histone H1b/H1-4 at 'Lys-26' (H1bK26me1 and H1bK26me2) and histone H4 at 'Lys-20' (H4K20me1 and H4K20me2), leading to condense chromatin and repress transcription. The protein is Lethal(3)malignant brain tumor-like protein 1 (L3MBTL1) of Gallus gallus (Chicken).